Consider the following 63-residue polypeptide: Hyphancin-3G (63 aa).

The first 22 residues, M1–A22, serve as a signal peptide directing secretion. The propeptide at V23–P26 is removed by a dipeptidylpeptidase. L61 carries the post-translational modification Leucine amide.

The protein belongs to the cecropin family.

The protein localises to the secreted. In terms of biological role, has antibacterial activity. This is Hyphancin-3G from Hyphantria cunea (Fall webworm moth).